Here is a 229-residue protein sequence, read N- to C-terminus: Ribonuclease 3 (229 aa).

Residues 4 to 133 (WEELQESVGF…FIGALYLDNG (130 aa)) form the RNase III domain. E46 is a binding site for Mg(2+). D50 is an active-site residue. Mg(2+) contacts are provided by D119 and E122. E122 is an active-site residue. The region spanning 159-228 (DYKTQLQEIV…AQFAINQLTH (70 aa)) is the DRBM domain.

The protein belongs to the ribonuclease III family. Homodimer. The cofactor is Mg(2+).

Its subcellular location is the cytoplasm. The enzyme catalyses Endonucleolytic cleavage to 5'-phosphomonoester.. Its function is as follows. Digests double-stranded RNA. Involved in the processing of primary rRNA transcript to yield the immediate precursors to the large and small rRNAs (23S and 16S). Processes some mRNAs, and tRNAs when they are encoded in the rRNA operon. Processes pre-crRNA and tracrRNA of type II CRISPR loci if present in the organism. This Listeria monocytogenes serotype 4b (strain CLIP80459) protein is Ribonuclease 3.